A 437-amino-acid polypeptide reads, in one-letter code: Putative O-antigen export protein (437 aa).

The next 12 membrane-spanning stretches (helical) occupy residues 3-23 (VPTH…SIFI), 41-61 (AVFT…FGLG), 81-101 (LVLS…ILIL), 129-149 (VASF…IWFS), 152-172 (KGWV…VFLM), 185-205 (IIFS…ISTL), 231-251 (GGFF…YIVM), 269-289 (TFGL…PVCA), 310-330 (FGFI…DFIV), 332-352 (ILAP…FSFY), 375-395 (LWIS…VGAV), and 398-418 (GLVG…SWWL).

Its subcellular location is the cell inner membrane. Its pathway is bacterial outer membrane biogenesis; LPS O-antigen biosynthesis. Functionally, may be involved in the translocation process of the nascent O-polysaccharide molecules and/or its ligation to lipid A core units. In Yersinia pseudotuberculosis, this protein is Putative O-antigen export protein (rfbX).